The sequence spans 1241 residues: ATP-dependent helicase/nuclease subunit A (1241 aa).

In terms of domain architecture, UvrD-like helicase ATP-binding spans 12–485; it reads SQWTDDQWKA…IDLAKNFRSR (474 aa). 33-40 is an ATP binding site; that stretch reads AAAGSGKT. A UvrD-like helicase C-terminal domain is found at 505–805; the sequence is GEIDYDADAE…RIMTIHKSKG (301 aa).

The protein belongs to the helicase family. AddA subfamily. As to quaternary structure, heterodimer of AddA and AddB/RexB. Mg(2+) is required as a cofactor.

The enzyme catalyses Couples ATP hydrolysis with the unwinding of duplex DNA by translocating in the 3'-5' direction.. The catalysed reaction is ATP + H2O = ADP + phosphate + H(+). Functionally, the heterodimer acts as both an ATP-dependent DNA helicase and an ATP-dependent, dual-direction single-stranded exonuclease. Recognizes the chi site generating a DNA molecule suitable for the initiation of homologous recombination. The AddA nuclease domain is required for chi fragment generation; this subunit has the helicase and 3' -&gt; 5' nuclease activities. The polypeptide is ATP-dependent helicase/nuclease subunit A (Bacillus cereus (strain G9842)).